Here is a 362-residue protein sequence, read N- to C-terminus: 1-aminocyclopropane-1-carboxylate oxidase homolog 10 (362 aa).

The Fe2OG dioxygenase domain maps to 211 to 310 (KGLFMLCHYY…RISVACFFSS (100 aa)). Residues histidine 235, aspartate 237, and histidine 291 each contribute to the Fe cation site. Residue arginine 301 coordinates 2-oxoglutarate.

Belongs to the iron/ascorbate-dependent oxidoreductase family. Requires Fe(2+) as cofactor.

In Arabidopsis thaliana (Mouse-ear cress), this protein is 1-aminocyclopropane-1-carboxylate oxidase homolog 10.